Consider the following 500-residue polypeptide: Protein psiE (500 aa).

An N-terminal signal peptide occupies residues Met1–Ser18. An N-linked (GlcNAc...) asparagine glycan is attached at Asn59. Residues Thr114–Asp256 form the PA14 domain. Residues Asn314, Asn341, Asn366, Asn420, and Asn469 are each glycosylated (N-linked (GlcNAc...) asparagine).

Belongs to the prespore-cell-inducing factor family.

It is found in the secreted. This chain is Protein psiE (psiE), found in Dictyostelium discoideum (Social amoeba).